Consider the following 332-residue polypeptide: Biotin synthase (332 aa).

The Radical SAM core domain occupies 53–282 (HFGKKVKLNM…TKEIRISGGR (230 aa)). 3 residues coordinate [4Fe-4S] cluster: Cys-71, Cys-75, and Cys-78. [2Fe-2S] cluster-binding residues include Cys-115, Cys-147, Cys-207, and Arg-277.

The protein belongs to the radical SAM superfamily. Biotin synthase family. Homodimer. It depends on [4Fe-4S] cluster as a cofactor. Requires [2Fe-2S] cluster as cofactor.

The catalysed reaction is (4R,5S)-dethiobiotin + (sulfur carrier)-SH + 2 reduced [2Fe-2S]-[ferredoxin] + 2 S-adenosyl-L-methionine = (sulfur carrier)-H + biotin + 2 5'-deoxyadenosine + 2 L-methionine + 2 oxidized [2Fe-2S]-[ferredoxin]. It participates in cofactor biosynthesis; biotin biosynthesis; biotin from 7,8-diaminononanoate: step 2/2. In terms of biological role, catalyzes the conversion of dethiobiotin (DTB) to biotin by the insertion of a sulfur atom into dethiobiotin via a radical-based mechanism. The chain is Biotin synthase from Bacillus cereus (strain G9842).